Consider the following 425-residue polypeptide: UDP-N-acetylglucosamine 1-carboxyvinyltransferase (425 aa).

Phosphoenolpyruvate is bound at residue 22 to 23; the sequence is KN. Position 93 (Arg93) interacts with UDP-N-acetyl-alpha-D-glucosamine. Cys117 acts as the Proton donor in catalysis. A 2-(S-cysteinyl)pyruvic acid O-phosphothioketal modification is found at Cys117. UDP-N-acetyl-alpha-D-glucosamine contacts are provided by residues 122–126, Asp307, and Val329; that span reads RPIDL.

It belongs to the EPSP synthase family. MurA subfamily.

Its subcellular location is the cytoplasm. It catalyses the reaction phosphoenolpyruvate + UDP-N-acetyl-alpha-D-glucosamine = UDP-N-acetyl-3-O-(1-carboxyvinyl)-alpha-D-glucosamine + phosphate. It participates in cell wall biogenesis; peptidoglycan biosynthesis. Its function is as follows. Cell wall formation. Adds enolpyruvyl to UDP-N-acetylglucosamine. The chain is UDP-N-acetylglucosamine 1-carboxyvinyltransferase from Prosthecochloris aestuarii (strain DSM 271 / SK 413).